Consider the following 283-residue polypeptide: Pantothenate synthetase (283 aa).

Position 30–37 (30–37 (MGYLHEGH)) interacts with ATP. Catalysis depends on His37, which acts as the Proton donor. Gln61 lines the (R)-pantoate pocket. Gln61 is a beta-alanine binding site. 147-150 (GLKD) contacts ATP. Gln153 contacts (R)-pantoate. ATP-binding positions include Val176 and 184–187 (KSSR).

It belongs to the pantothenate synthetase family. In terms of assembly, homodimer.

The protein resides in the cytoplasm. The enzyme catalyses (R)-pantoate + beta-alanine + ATP = (R)-pantothenate + AMP + diphosphate + H(+). The protein operates within cofactor biosynthesis; (R)-pantothenate biosynthesis; (R)-pantothenate from (R)-pantoate and beta-alanine: step 1/1. Its function is as follows. Catalyzes the condensation of pantoate with beta-alanine in an ATP-dependent reaction via a pantoyl-adenylate intermediate. In Halalkalibacterium halodurans (strain ATCC BAA-125 / DSM 18197 / FERM 7344 / JCM 9153 / C-125) (Bacillus halodurans), this protein is Pantothenate synthetase.